We begin with the raw amino-acid sequence, 472 residues long: ATP synthase subunit beta (472 aa).

155 to 162 (GGAGVGKT) serves as a coordination point for ATP.

The protein belongs to the ATPase alpha/beta chains family. F-type ATPases have 2 components, CF(1) - the catalytic core - and CF(0) - the membrane proton channel. CF(1) has five subunits: alpha(3), beta(3), gamma(1), delta(1), epsilon(1). CF(0) has three main subunits: a(1), b(2) and c(9-12). The alpha and beta chains form an alternating ring which encloses part of the gamma chain. CF(1) is attached to CF(0) by a central stalk formed by the gamma and epsilon chains, while a peripheral stalk is formed by the delta and b chains.

The protein localises to the cell membrane. The catalysed reaction is ATP + H2O + 4 H(+)(in) = ADP + phosphate + 5 H(+)(out). Its function is as follows. Produces ATP from ADP in the presence of a proton gradient across the membrane. The catalytic sites are hosted primarily by the beta subunits. The protein is ATP synthase subunit beta of Fervidobacterium islandicum.